The primary structure comprises 294 residues: Putative pyruvate, phosphate dikinase regulatory protein (294 aa).

An ADP-binding site is contributed by Gly-156–Thr-163.

It belongs to the pyruvate, phosphate/water dikinase regulatory protein family. PDRP subfamily.

The catalysed reaction is N(tele)-phospho-L-histidyl/L-threonyl-[pyruvate, phosphate dikinase] + ADP = N(tele)-phospho-L-histidyl/O-phospho-L-threonyl-[pyruvate, phosphate dikinase] + AMP + H(+). It carries out the reaction N(tele)-phospho-L-histidyl/O-phospho-L-threonyl-[pyruvate, phosphate dikinase] + phosphate + H(+) = N(tele)-phospho-L-histidyl/L-threonyl-[pyruvate, phosphate dikinase] + diphosphate. Its function is as follows. Bifunctional serine/threonine kinase and phosphorylase involved in the regulation of the pyruvate, phosphate dikinase (PPDK) by catalyzing its phosphorylation/dephosphorylation. The sequence is that of Putative pyruvate, phosphate dikinase regulatory protein from Cutibacterium acnes (strain DSM 16379 / KPA171202) (Propionibacterium acnes).